The following is a 328-amino-acid chain: Probable cell division protein WhiA (328 aa).

The H-T-H motif DNA-binding region spans serine 275 to glutamate 308.

Belongs to the WhiA family.

Its function is as follows. Involved in cell division and chromosome segregation. This is Probable cell division protein WhiA from Corynebacterium jeikeium (strain K411).